Consider the following 482-residue polypeptide: Pup--protein ligase (482 aa).

A Mg(2+)-binding site is contributed by Glu-16. Arg-60 serves as a coordination point for ATP. Residue Tyr-62 coordinates Mg(2+). Asp-64 (proton acceptor) is an active-site residue. A Mg(2+)-binding site is contributed by Glu-70. 2 residues coordinate ATP: Thr-73 and Trp-440.

It belongs to the Pup ligase/Pup deamidase family. Pup-conjugating enzyme subfamily.

The enzyme catalyses ATP + [prokaryotic ubiquitin-like protein]-L-glutamate + [protein]-L-lysine = ADP + phosphate + N(6)-([prokaryotic ubiquitin-like protein]-gamma-L-glutamyl)-[protein]-L-lysine.. It functions in the pathway protein degradation; proteasomal Pup-dependent pathway. Its pathway is protein modification; protein pupylation. Functionally, catalyzes the covalent attachment of the prokaryotic ubiquitin-like protein modifier Pup to the proteasomal substrate proteins, thereby targeting them for proteasomal degradation. This tagging system is termed pupylation. The ligation reaction involves the side-chain carboxylate of the C-terminal glutamate of Pup and the side-chain amino group of a substrate lysine. The sequence is that of Pup--protein ligase from Corynebacterium glutamicum (strain R).